Reading from the N-terminus, the 261-residue chain is Proline-rich protein HaeIII subfamily 1 (261 aa).

The signal sequence occupies residues 1–15 (MLVVLFTVALLALSS). The segment at 15–261 (SAQGPREENQ…PPQGRPQGPR (247 aa)) is disordered. Composition is skewed to pro residues over residues 32–44 (QRPP…PRPP) and 51–237 (GPPP…PPTG). The span at 238-261 (GPQQTPPLAGNTQGPPQGRPQGPR) shows a compositional bias: low complexity.

Its subcellular location is the secreted. This Mus musculus (Mouse) protein is Proline-rich protein HaeIII subfamily 1 (Prh1).